The chain runs to 416 residues: 3-oxoacyl-[acyl-carrier-protein] synthase 1 (416 aa).

One can recognise a Ketosynthase family 3 (KS3) domain in the interval 11–415 (FPSVVVTAVT…GHNVALAFGR (405 aa)). Catalysis depends on for beta-ketoacyl synthase activity residues C171, H311, and H345. Residues H311 and H345 each coordinate substrate.

It belongs to the thiolase-like superfamily. Beta-ketoacyl-ACP synthases family.

It localises to the cytoplasm. The enzyme catalyses an ultra-long-chain mono-unsaturated fatty acyl-[ACP] + malonyl-[ACP] + H(+) = a 3-oxo-ultra-long-chain mono-unsaturated fatty acyl-[ACP] + holo-[ACP] + CO2. It participates in lipid metabolism; mycolic acid biosynthesis. Functionally, part of the mycobacterial fatty acid elongation system FAS-II, which is involved in mycolic acid biosynthesis. Catalyzes the elongation of long chain acyl-ACP substrates by the addition of two carbons from malonyl-ACP to an acyl acceptor. Involved in the initial extension of the mycolate chain and forms monounsaturated fatty acids that averaged 40 carbons in length. In Mycobacterium leprae (strain TN), this protein is 3-oxoacyl-[acyl-carrier-protein] synthase 1 (kasA).